Here is a 196-residue protein sequence, read N- to C-terminus: MTRQATIDRTTSETSIRLSIDLDGTGQTDIATGIGFLDHMLTALARHALLDLTIRATSDLHIDDHHTTEDVGIVLGQALRQALGDKKGIRRFGHAIVPMDEALAEAAIDLSGRAHVAWSVPFLQSKVGTMDTELFEEFFRAFGGNALMTLHVTLKAGTNTHHVAEACFKAVARALRMAVERDPRVGDAIPSTKGAL.

The protein belongs to the imidazoleglycerol-phosphate dehydratase family.

It localises to the cytoplasm. The catalysed reaction is D-erythro-1-(imidazol-4-yl)glycerol 3-phosphate = 3-(imidazol-4-yl)-2-oxopropyl phosphate + H2O. It functions in the pathway amino-acid biosynthesis; L-histidine biosynthesis; L-histidine from 5-phospho-alpha-D-ribose 1-diphosphate: step 6/9. This is Imidazoleglycerol-phosphate dehydratase from Granulibacter bethesdensis (strain ATCC BAA-1260 / CGDNIH1).